Here is a 426-residue protein sequence, read N- to C-terminus: Glutamyl-tRNA(Gln) amidotransferase subunit D (426 aa).

Residues 82–413 (KNISILSTGG…KDAKKLICKN (332 aa)) form the Asparaginase/glutaminase domain. Active-site residues include Thr92, Thr168, Asp169, and Lys245.

The protein belongs to the asparaginase 1 family. GatD subfamily. As to quaternary structure, heterodimer of GatD and GatE.

It catalyses the reaction L-glutamyl-tRNA(Gln) + L-glutamine + ATP + H2O = L-glutaminyl-tRNA(Gln) + L-glutamate + ADP + phosphate + H(+). Its function is as follows. Allows the formation of correctly charged Gln-tRNA(Gln) through the transamidation of misacylated Glu-tRNA(Gln) in organisms which lack glutaminyl-tRNA synthetase. The reaction takes place in the presence of glutamine and ATP through an activated gamma-phospho-Glu-tRNA(Gln). The GatDE system is specific for glutamate and does not act on aspartate. This chain is Glutamyl-tRNA(Gln) amidotransferase subunit D, found in Methanococcus vannielii (strain ATCC 35089 / DSM 1224 / JCM 13029 / OCM 148 / SB).